Reading from the N-terminus, the 105-residue chain is Small cysteine and glycine repeat-containing protein 4 (105 aa).

Residues C4–G87 are 14 X 2 AA repeats of CG.

The protein belongs to the KRTAP type 28 family.

In terms of biological role, in the hair cortex, hair keratin intermediate filaments are embedded in an interfilamentous matrix, consisting of hair keratin-associated proteins (KRTAP), which are essential for the formation of a rigid and resistant hair shaft through their extensive disulfide bond cross-linking with abundant cysteine residues of hair keratins. The matrix proteins include the high-sulfur and high-glycine-tyrosine keratins. This chain is Small cysteine and glycine repeat-containing protein 4, found in Homo sapiens (Human).